Here is a 117-residue protein sequence, read N- to C-terminus: Small ribosomal subunit protein bS6 (117 aa).

Belongs to the bacterial ribosomal protein bS6 family.

Binds together with bS18 to 16S ribosomal RNA. This Trichodesmium erythraeum (strain IMS101) protein is Small ribosomal subunit protein bS6.